Consider the following 264-residue polypeptide: E3 ubiquitin-protein ligase MARCHF8 (264 aa).

The segment at 15–47 (LGHSVSRSSNISKAGSPTSVSAPSSFPRTSVTP) is disordered. Residues 17–47 (HSVSRSSNISKAGSPTSVSAPSSFPRTSVTP) show a composition bias toward polar residues. An RING-CH-type zinc finger spans residues 45 to 106 (VTPSSQDICR…ELCKFEFIME (62 aa)). Positions 53, 56, 70, 72, 80, 83, 96, and 99 each coordinate Zn(2+). 2 helical membrane passes run 130–150 (CSVT…YVLI) and 170–190 (FWTK…FMYV).

Its subcellular location is the cytoplasmic vesicle membrane. It localises to the lysosome membrane. The protein localises to the early endosome membrane. The enzyme catalyses S-ubiquitinyl-[E2 ubiquitin-conjugating enzyme]-L-cysteine + [acceptor protein]-L-lysine = [E2 ubiquitin-conjugating enzyme]-L-cysteine + N(6)-ubiquitinyl-[acceptor protein]-L-lysine.. The protein operates within protein modification; protein ubiquitination. E3 ubiquitin-protein ligase that mediates ubiquitination of cd86 and MHC class II proteins, such as hla-dr alpha and beta, and promotes their subsequent endocytosis and sorting to lysosomes via multivesicular bodies. The protein is E3 ubiquitin-protein ligase MARCHF8 (marchf8) of Xenopus tropicalis (Western clawed frog).